A 1736-amino-acid chain; its full sequence is Collagen alpha-2(XI) chain (1736 aa).

A signal peptide spans 1–27 (MERCSRCHHLLLLVLLLLWLSAAPAWA). A Laminin G-like domain is found at 57-228 (DVAYRVSRPA…ESCDQKELEC (172 aa)). The tract at residues 215–486 (QAAYESCDQK…ILQQARVALR (272 aa)) is nonhelical region. Disordered regions lie at residues 229–465 (EGGW…DKGP) and 485–1539 (LRGP…SPGG). Residues 258 to 270 (PQNQEPQAQSTES) show a composition bias toward polar residues. A compositionally biased stretch (low complexity) spans 363-376 (ALSAETARSEAAAR). 3 consecutive Collagen-like domains span residues 399–447 (GPPG…GPPG), 487–545 (GPPG…ADGA), and 546–587 (RGMP…PPGE). A compositionally biased stretch (pro residues) spans 400-413 (PPGPEGPAGFPGPP). Positions 487-1500 (GPPGPMGYTG…PGHPGPPGEV (1014 aa)) are triple-helical region. The segment covering 515–533 (DLGPQGPRGPQGLMGPPGK) has biased composition (low complexity). Residues 615–624 (KGPPGIPGPP) are compositionally biased toward pro residues. Residues 650–663 (QQGTPGTQGLPGPQ) are compositionally biased toward low complexity. Basic and acidic residues predominate over residues 765–774 (RGEDGPEGPK). A compositionally biased stretch (low complexity) spans 842-861 (PTGPRGQRGPRGATGKSGAK). The segment covering 994–1003 (GTAGGPGLKG) has biased composition (gly residues). The segment covering 1029–1040 (IGPPGRPGPQGP) has biased composition (pro residues). Collagen-like domains lie at 1072 to 1127 (GPAG…ADGE) and 1128 to 1172 (PGAR…ETGD). Over residues 1115–1133 (PVGQPGAAGADGEPGARGP) the composition is skewed to low complexity. Residues 1176–1187 (MGPPGPPGPRGP) are compositionally biased toward pro residues. Residues 1217-1230 (ESGSPGVQGEPGVK) are compositionally biased toward low complexity. Basic and acidic residues-rich tracts occupy residues 1232 to 1241 (PRGERGEKGE) and 1287 to 1296 (DGAKGDRGED). Composition is skewed to low complexity over residues 1341–1364 (PGAV…KPGP) and 1376–1386 (QQGRPGATGQA). Over residues 1388–1397 (PPGPVGPPGL) the composition is skewed to pro residues. The segment covering 1413 to 1422 (PGLIGLIGPP) has biased composition (low complexity). The 56-residue stretch at 1444–1499 (GETGIPGASGPIGPGGPPGLPGPAGPKGAKGATGPAGPKGEKGVQGPPGHPGPPGE) folds into the Collagen-like 6 domain. Over residues 1457–1467 (PGGPPGLPGPA) the composition is skewed to pro residues. Over residues 1469-1481 (PKGAKGATGPAGP) the composition is skewed to low complexity. A propeptide spans 1501-1736 (IQPLPIQMPK…VLLGPVCFMG (236 aa)) (C-terminal propeptide). Residues 1541 to 1735 (EEIFGSLDSL…GVLLGPVCFM (195 aa)) form the Fibrillar collagen NC1 domain. Cys1571 and Cys1603 are joined by a disulfide. Ca(2+) is bound by residues Asp1589, Asn1591, Gln1592, Cys1594, and Asp1597. Asn1604 and Asn1650 each carry an N-linked (GlcNAc...) asparagine glycan. Disulfide bonds link Cys1612–Cys1733 and Cys1655–Cys1689.

It belongs to the fibrillar collagen family. Trimers composed of three different chains: alpha 1(XI), alpha 2(XI), and alpha 3(XI). Alpha 3(XI) is a post-translational modification of alpha 1(II). Alpha 1(V) can also be found instead of alpha 3(XI)=1(II). In terms of processing, prolines at the third position of the tripeptide repeating unit (G-X-Y) are hydroxylated in some or all of the chains.

It localises to the secreted. The protein resides in the extracellular space. The protein localises to the extracellular matrix. Functionally, may play an important role in fibrillogenesis by controlling lateral growth of collagen II fibrils. The polypeptide is Collagen alpha-2(XI) chain (COL11A2) (Bos taurus (Bovine)).